The primary structure comprises 324 residues: NADH-dependent D-xylose reductase (324 aa).

The active-site Proton donor is the Tyr-54. His-116 lines the substrate pocket. 220–286 (SSFGPQSFLE…SNSPDRMAQN (67 aa)) contacts NAD(+).

The protein belongs to the aldo/keto reductase family.

The catalysed reaction is xylitol + NAD(+) = D-xylose + NADH + H(+). It carries out the reaction xylitol + NADP(+) = D-xylose + NADPH + H(+). It functions in the pathway carbohydrate metabolism; D-xylose degradation. Its function is as follows. Reduces D-xylose into xylitol. Preferentially utilizes NADH as a cosubstrate. This is NADH-dependent D-xylose reductase (XYL1) from Candida parapsilosis (Yeast).